The sequence spans 245 residues: Heat shock transcription factor (245 aa).

The DNA-binding element occupies 17 to 115 (KSGFVNRLYR…LISLITRDKS (99 aa)). The interval 130-169 (SLQYLASCNYKQQKEINDLKDRIKTLETKYATLYEIISNA) is involved in trimerization.

It belongs to the HSF family. Homotrimer. Homotrimerization increases the affinity of HSF1 to DNA.

Its subcellular location is the nucleus. Functionally, DNA-binding transcription factor that specifically binds heat shock promoter elements (HSE) and activates transcription. The chain is Heat shock transcription factor from Enterocytozoon bieneusi (strain H348) (Microsporidian parasite).